The primary structure comprises 420 residues: O-methyltransferase opaF (420 aa).

Residues 262–263 (GG), Asp-287, and 308–309 (DL) each bind S-adenosyl-L-methionine. The Proton acceptor role is filled by His-328.

Belongs to the class I-like SAM-binding methyltransferase superfamily. Cation-independent O-methyltransferase family.

It functions in the pathway secondary metabolite biosynthesis. Functionally, O-methyltransferase; part of the gene cluster that mediates the biosynthesis of oxepinamides, derivatives of anthranilyl-containing tripeptides that share an oxepin ring and a fused pyrimidinone moiety. The nonribosomal peptide synthetase (NRPS) opaA assembles the quinazolinone core with D-Phe incorporation. The first adenylation domain (A1) of opaA loads and activates anthranilic acid whereas the second A domain (A2) is for activating of L-Phe, which is then converted to D-form by the E domain. The third A domain (A3) is responsible for L-Ile activation and the terminal condensation domain C3 for cyclization and releasing the NRPS product protuboxepin K. The cytochrome P450 monooxygenase opaB then catalyzes alone the oxepin ring formation to convert protuboxepin K into protuboxepin A. The flavoenzyme opaC installs subsequently one hydroxyl group at the oxepin ring, accompanied by double bond migration, to form 15-epi-oxepinamide E. The epimerase opaE changes the D-Phe residue back to L-form, leading to oxepinamide E, which is further methylated at the hydroxyl group at C-12 by the O-methyltransferase OpaF to yield oxepinamide F. The protein is O-methyltransferase opaF of Aspergillus ustus.